Reading from the N-terminus, the 206-residue chain is Alpha-S1-casein (206 aa).

A signal peptide spans 1–15 (MKLLIFICLAAVALA). Serine 33, serine 77, serine 78, serine 79, serine 80, serine 81, serine 82, and serine 89 each carry phosphoserine. The interval 67–106 (HGMEGHEQRGSSSSSSEEVVGNSAEQKHVQKEEDVPSQSY) is disordered. Over residues 91-100 (EQKHVQKEED) the composition is skewed to basic and acidic residues.

This sequence belongs to the alpha-casein family. Mammary gland specific. Secreted in milk.

It localises to the secreted. In terms of biological role, important role in the capacity of milk to transport calcium phosphate. This Sus scrofa (Pig) protein is Alpha-S1-casein (CSN1S1).